The primary structure comprises 144 residues: Actin-associated protein FAM107A (144 aa).

The stretch at 67 to 94 (LQRVLEHRRRNQLIKKKKEELEAKRLQC) forms a coiled coil. The Nuclear localization signal motif lies at 74-84 (RRRNQLIKKKK). A disordered region spans residues 105–124 (QRLNQLEKPPEKEEDHAPEF). Residues 112-124 (KPPEKEEDHAPEF) are compositionally biased toward basic and acidic residues.

Belongs to the FAM107 family. As to quaternary structure, interacts with ACTB. Interacts with COMMD1; this interaction stabilizes COMMD1 in the nucleus. Interacts with MAP1A. Interacts with PRDX1. Interacts with F-actin.

The protein resides in the nucleus. Its subcellular location is the cytoplasm. It localises to the cytoskeleton. The protein localises to the stress fiber. It is found in the cell junction. The protein resides in the focal adhesion. Its subcellular location is the cell projection. It localises to the ruffle membrane. The protein localises to the synapse. In terms of biological role, stress-inducible actin-binding protein that plays a role in synaptic and cognitive functions by modulating actin filamentous (F-actin) dynamics. Mediates polymerization of globular actin to F-actin. Also binds to, stabilizes and bundles F-actin. Involved in synaptic function by regulating neurite outgrowth in an actin-dependent manner and for the acquisition of hippocampus-dependent cognitive function, such as learning and long-term memory. Plays a role in the actin and microtubule cytoskeleton organization; negatively regulates focal adhesion (FA) assembly promoting malignant glial cell migration in an actin-, microtubule- and MAP1A-dependent manner. Also involved in neuroblastoma G1/S phase cell cycle progression and cell proliferation inhibition by stimulating ubiquitination of NF-kappa-B subunit RELA and NF-kappa-B degradation in a COMMD1- and actin-dependent manner. May play a role in tumor development. In Pan troglodytes (Chimpanzee), this protein is Actin-associated protein FAM107A (FAM107A).